A 667-amino-acid polypeptide reads, in one-letter code: Soluble guanylate cyclase 89Da (667 aa).

H104 contributes to the heme binding site. Positions A337–R364 are disordered. The segment covering D347–D358 has biased composition (acidic residues). Residues Q427–S455 adopt a coiled-coil conformation. Positions S491–E617 constitute a Guanylate cyclase domain.

It belongs to the adenylyl cyclase class-4/guanylyl cyclase family. Heterodimer; with Gyc88E, in the presence of magnesium or manganese. The cofactor is heme.

It localises to the cytoplasm. It carries out the reaction GTP = 3',5'-cyclic GMP + diphosphate. With respect to regulation, probably not activated by nitric oxide (NO). Heterodimer also exhibits some stimulation, some compounds (SIN-1 and two of the NONOates) that were ineffective at stimulating Gyc-88E alone did stimulate the heterodimer. Functionally, heterodimers with Gyc-89Da and Gyc-89Db are activated in response to changing oxygen concentrations, alerting flies to hypoxic environments. Under normal oxygen concentrations, oxygen binds to the heme group and results in low levels of guanylyl cyclase activity. When exposed to reduced oxygen concentrations, the oxygen dissociates from the heme group resulting in activation of the enzyme. The polypeptide is Soluble guanylate cyclase 89Da (Drosophila melanogaster (Fruit fly)).